The following is a 328-amino-acid chain: Tetraacyldisaccharide 4'-kinase (328 aa).

55 to 62 (TAGGNGKT) serves as a coordination point for ATP.

This sequence belongs to the LpxK family.

It carries out the reaction a lipid A disaccharide + ATP = a lipid IVA + ADP + H(+). Its pathway is glycolipid biosynthesis; lipid IV(A) biosynthesis; lipid IV(A) from (3R)-3-hydroxytetradecanoyl-[acyl-carrier-protein] and UDP-N-acetyl-alpha-D-glucosamine: step 6/6. Its function is as follows. Transfers the gamma-phosphate of ATP to the 4'-position of a tetraacyldisaccharide 1-phosphate intermediate (termed DS-1-P) to form tetraacyldisaccharide 1,4'-bis-phosphate (lipid IVA). The polypeptide is Tetraacyldisaccharide 4'-kinase (Escherichia coli O6:K15:H31 (strain 536 / UPEC)).